The chain runs to 728 residues: Catalase-peroxidase (728 aa).

Residues 1–19 form the signal peptide; the sequence is MSTEAKCPVTGGATRSSSA. The tract at residues 1–20 is disordered; sequence MSTEAKCPVTGGATRSSSAG. A cross-link (tryptophyl-tyrosyl-methioninium (Trp-Tyr) (with M-245)) is located at residues 96–219; sequence WHAAGTYRIG…LAAVQMGLIY (124 aa). The Proton acceptor role is filled by His97. The segment at residues 219–245 is a cross-link (tryptophyl-tyrosyl-methioninium (Tyr-Met) (with W-96)); it reads YVNPEGPNGKPDPVAAARDIRETFARM. Residue His260 coordinates heme b.

It belongs to the peroxidase family. Peroxidase/catalase subfamily. As to quaternary structure, homodimer or homotetramer. Requires heme b as cofactor. Post-translationally, formation of the three residue Trp-Tyr-Met cross-link is important for the catalase, but not the peroxidase activity of the enzyme.

The catalysed reaction is H2O2 + AH2 = A + 2 H2O. The enzyme catalyses 2 H2O2 = O2 + 2 H2O. In terms of biological role, bifunctional enzyme with both catalase and broad-spectrum peroxidase activity. This is Catalase-peroxidase from Acidiphilium cryptum (strain JF-5).